Here is a 324-residue protein sequence, read N- to C-terminus: MADGDSGSERGGGGGGGGGPGGFQPAPRGGGGGGGGPGGEQETQELASKRLDIQNKRFYLDVKQNAKGRFLKIAEVGAGGSKSRLTLSMAVAAEFRDSLGDFIEHYAQLGPSSPEQLAAGAEEGGGPRRALKSEFLVRENRKYYLDLKENQRGRFLRIRQTVNRGGGGFGGGPGPGGLQSGQTIALPAQGLIEFRDALAKLIDDYGGDEDELAGGPGGGAGGPGGGLYGELPEGTSITVDSKRFFFDVGCNKYGVFLRVSEVKPSYRNAITVPFKAWGKFGGAFCRYADEMKEIQERQRDKLYERRGGGSGGGDESEGEEVDED.

Residues 1-47 (MADGDSGSERGGGGGGGGGPGGFQPAPRGGGGGGGGPGGEQETQELA) are disordered. Alanine 2 is subject to N-acetylalanine. Serine 6 and serine 8 each carry phosphoserine. The segment covering 9–39 (ERGGGGGGGGGPGGFQPAPRGGGGGGGGPGG) has biased composition (gly residues). The residue at position 28 (arginine 28) is an Omega-N-methylarginine. A DNA-binding region spans residues 37 to 263 (PGGEQETQEL…GVFLRVSEVK (227 aa)). Threonine 43 is modified (phosphothreonine). Phosphoserine is present on serine 113. An Omega-N-methylarginine modification is found at arginine 164. Lysine 279 is subject to N6-acetyllysine. Positions 297-307 (RQRDKLYERRG) are enriched in basic and acidic residues. Positions 297–324 (RQRDKLYERRGGGSGGGDESEGEEVDED) are disordered. Position 306 is an omega-N-methylarginine (arginine 306). Phosphoserine occurs at positions 310 and 316. The segment covering 314 to 324 (DESEGEEVDED) has biased composition (acidic residues).

It belongs to the PUR DNA-binding protein family. As to quaternary structure, homodimer, heterodimer with PURA and heterotrimer with PURA and YBX1/Y-box protein 1. Interacts with MYOCD and SRF.

The protein localises to the nucleus. Its function is as follows. Transcriptional regulator which can act as an activator or a repressor. Represses the transcription of ACTA2 in fibroblasts and smooth muscle cells via its ability to interact with the purine-rich strand of a MCAT-containing element in the 5' flanking region of the gene. Represses the transcription of MYOCD, capable of repressing all isoforms of MYOCD but the magnitude of the repressive effects is most notable for the SMC-specific isoforms. Promotes hepatic glucose production by activating the transcription of ADCY6, leading to cAMP accumulation, increased PKA activity, CREB activation, and increased transcription of PCK1 and G6PC genes. Has capacity to bind repeated elements in single-stranded DNA such as the purine-rich single strand of the PUR element located upstream of the MYC gene. Participates in transcriptional and translational regulation of alpha-MHC expression in cardiac myocytes by binding to the purine-rich negative regulatory (PNR) element. Modulates constitutive liver galectin-3 gene transcription by binding to its promoter. May play a role in the dendritic transport of a subset of mRNAs. In Mus musculus (Mouse), this protein is Transcriptional regulator protein Pur-beta (Purb).